Consider the following 943-residue polypeptide: Protein translocase subunit SecA (943 aa).

Residues glutamine 90, 108–112 (GEGKT), and aspartate 509 each bind ATP. The disordered stretch occupies residues 535–562 (PDNEHKPPIPKQRNSKSKGGFSRKAGSN).

Belongs to the SecA family. In terms of assembly, monomer and homodimer. Part of the essential Sec protein translocation apparatus which comprises SecA, SecYEG and auxiliary proteins SecDF. Other proteins may also be involved.

The protein localises to the cell inner membrane. Its subcellular location is the cellular thylakoid membrane. The protein resides in the cytoplasm. The enzyme catalyses ATP + H2O + cellular proteinSide 1 = ADP + phosphate + cellular proteinSide 2.. In terms of biological role, part of the Sec protein translocase complex. Interacts with the SecYEG preprotein conducting channel. Has a central role in coupling the hydrolysis of ATP to the transfer of proteins into and across the cell membrane, serving as an ATP-driven molecular motor driving the stepwise translocation of polypeptide chains across the membrane. Its function is as follows. Probably participates in protein translocation into and across both the cytoplasmic and thylakoid membranes in cyanobacterial cells. The protein is Protein translocase subunit SecA of Prochlorococcus marinus (strain AS9601).